Here is a 160-residue protein sequence, read N- to C-terminus: MTTQEDTTGLHQKTSLWTMSRPGAKKVMNSYFIAGCGPAVCYYAVSWLRQGFSINLTSFGRIPWPHAGVGTCPSPQSWISPFLQSHREHHYAKTSSHSQPSPQSLALCLAYSRCSINICQMTECISLASGCHQALREPGRSEESFWIPATPYISNIFSES.

A helical membrane pass occupies residues 27 to 47 (VMNSYFIAGCGPAVCYYAVSW).

It is found in the membrane. This is an uncharacterized protein from Homo sapiens (Human).